Consider the following 246-residue polypeptide: Chemokine-binding protein (246 aa).

Residues 108-125 are compositionally biased toward polar residues; the sequence is SESSDGNTVNTRLSSVSP. Residues 108–132 are disordered; it reads SESSDGNTVNTRLSSVSPGQGKDSP.

Belongs to the orthopoxvirus OPG001 family.

It localises to the secreted. Inhibits host immune defense by binding to host chemokines. Binds host CC chemokines (beta chemokines) such as RANTES with high affinity, but not CXC or C chemokines (alpha and gamma chemokines). This is Chemokine-binding protein (OPG001) from Monkeypox virus.